The primary structure comprises 158 residues: MAQSVKTMVEGGKATTGPPIGPALGPLGLNVAQVVKEINEKTKEFQGMQVPVTVTVIDPETKKYEITVGVPPTSALLKKELGLEKGASKKKEAVAGNATLEQIKNVAIKKMPSMLAKDLKSAVLEVLGTCVAMGINVEGKDPKEVQKLIKSGQIKIEQ.

The interval methionine 1–glycine 21 is disordered.

Belongs to the universal ribosomal protein uL11 family. Part of the ribosomal stalk of the 50S ribosomal subunit. Interacts with L10 and the large rRNA to form the base of the stalk. L10 forms an elongated spine to which L12 dimers bind in a sequential fashion forming a multimeric L10(L12)X complex.

Forms part of the ribosomal stalk which helps the ribosome interact with GTP-bound translation factors. This is Large ribosomal subunit protein uL11 from Thermoplasma volcanium (strain ATCC 51530 / DSM 4299 / JCM 9571 / NBRC 15438 / GSS1).